The following is a 393-amino-acid chain: Small RNA 2'-O-methyltransferase (393 aa).

The S-adenosyl-L-methionine site is built by serine 60, aspartate 78, and serine 114. Mg(2+) is bound by residues glutamate 132, glutamate 135, histidine 136, and histidine 181. Positions 283 to 309 (RVSHLPRRKEQDGEQGDKPKDIGGSKA) are disordered. Over residues 290-305 (RKEQDGEQGDKPKDIG) the composition is skewed to basic and acidic residues.

It belongs to the methyltransferase superfamily. HEN1 family. The cofactor is Mg(2+).

It localises to the cytoplasm. The catalysed reaction is small RNA 3'-end nucleotide + S-adenosyl-L-methionine = small RNA 3'-end 2'-O-methylnucleotide + S-adenosyl-L-homocysteine + H(+). In terms of biological role, methyltransferase that adds a 2'-O-methyl group at the 3'-end of piRNAs, a class of 24 to 30 nucleotide RNAs that are generated by a Dicer-independent mechanism and are primarily derived from transposons and other repeated sequence elements. This probably protects the 3'-end of piRNAs from uridylation activity and subsequent degradation. Stabilization of piRNAs is essential for gametogenesis. This Macaca fascicularis (Crab-eating macaque) protein is Small RNA 2'-O-methyltransferase (HENMT1).